Here is a 251-residue protein sequence, read N- to C-terminus: Cobalt transport protein CbiM (251 aa).

The signal sequence occupies residues 1–27; it reads MNKKKNTILIGLYFLVGIMLFPDRIYA. Helical transmembrane passes span 35-55, 66-86, 103-123, 131-151, 166-186, and 208-228; these read LPVKWAGIWWIAMLPFLALGI, GPGIKMLLALAGAFVFVLSSL, LGAILFGPWPMVVLGCIVLIF, GGLTTLGANVFSMAIVGPFVA, WLSVFTGSALGNLLTYITTAT, and VFATTQVPLAVTEGLVTVLIF.

Belongs to the CbiM family. Forms an energy-coupling factor (ECF) transporter complex composed of an ATP-binding protein (A component, CbiO), a transmembrane protein (T component, CbiQ) and 2 possible substrate-capture proteins (S components, CbiM and CbiN) of unknown stoichimetry.

The protein localises to the cell membrane. It participates in cofactor biosynthesis; adenosylcobalamin biosynthesis. Functionally, part of the energy-coupling factor (ECF) transporter complex CbiMNOQ involved in cobalt import. The sequence is that of Cobalt transport protein CbiM from Acetohalobium arabaticum (strain ATCC 49924 / DSM 5501 / Z-7288).